The following is a 401-amino-acid chain: Flagellin D (401 aa).

Belongs to the bacterial flagellin family.

It localises to the secreted. Its subcellular location is the bacterial flagellum. Its function is as follows. Flagellin is the subunit protein which polymerizes to form the filaments of bacterial flagella. The sequence is that of Flagellin D (flaD) from Rhizobium meliloti (strain 1021) (Ensifer meliloti).